The primary structure comprises 283 residues: Acetylglutamate kinase (283 aa).

Substrate contacts are provided by residues 63-64, Arg-85, and Asn-178; that span reads GG.

It belongs to the acetylglutamate kinase family. ArgB subfamily.

It is found in the cytoplasm. It carries out the reaction N-acetyl-L-glutamate + ATP = N-acetyl-L-glutamyl 5-phosphate + ADP. It functions in the pathway amino-acid biosynthesis; L-arginine biosynthesis; N(2)-acetyl-L-ornithine from L-glutamate: step 2/4. Catalyzes the ATP-dependent phosphorylation of N-acetyl-L-glutamate. This chain is Acetylglutamate kinase, found in Prochlorococcus marinus (strain MIT 9301).